Consider the following 137-residue polypeptide: SPbeta prophage-derived uncharacterized protein YoqU (137 aa).

This chain is SPbeta prophage-derived uncharacterized protein YoqU (yoqU), found in Bacillus subtilis (strain 168).